The following is a 401-amino-acid chain: Cartilage-associated protein (401 aa).

Residues 1–26 (MEPGRRGAAALLALLCVACALRAGRA) form the signal peptide. Residues Asn87 and Asn363 are each glycosylated (N-linked (GlcNAc...) asparagine).

The protein belongs to the leprecan family. In terms of tissue distribution, found in articular chondrocytes. Expressed in a variety of tissues.

The protein resides in the secreted. The protein localises to the extracellular space. Its subcellular location is the extracellular matrix. Functionally, necessary for efficient 3-hydroxylation of fibrillar collagen prolyl residues. The polypeptide is Cartilage-associated protein (CRTAP) (Homo sapiens (Human)).